The following is a 277-amino-acid chain: Protein CUSTOS (277 aa).

Disordered stretches follow at residues 1-81 (MVAP…QTTP), 108-182 (TQQA…QRCR), and 238-277 (SVNGDPVLSGTKKKKKKKAKKAREASLCPPAECAAAEPKN). Over residues 9 to 18 (SDSESSSSDS) the composition is skewed to low complexity. Phosphoserine is present on serine 62. Basic and acidic residues predominate over residues 63–72 (RRREVNQHDE). At threonine 80 the chain carries Phosphothreonine. Residues 106 to 141 (KKTQQARLQQEAKEQQEAKEQQAAKEEQAAKKEEDG) adopt a coiled-coil conformation. Basic and acidic residues predominate over residues 115–142 (QEAKEQQEAKEQQAAKEEQAAKKEEDGF). A phosphoserine mark is found at serine 158 and serine 238. Residues 248-258 (TKKKKKKKAKK) are compositionally biased toward basic residues. Residues 249–256 (KKKKKKKA) carry the Nucleolar localization signal (NLS) motif. A compositionally biased stretch (low complexity) spans 265–277 (CPPAECAAAEPKN).

It belongs to the CUSTOS family.

It is found in the nucleus envelope. Functionally, plays a role in the regulation of Wnt signaling pathway during early development. This Rattus norvegicus (Rat) protein is Protein CUSTOS.